A 347-amino-acid polypeptide reads, in one-letter code: Holliday junction branch migration complex subunit RuvB (347 aa).

Residues 1–181 (MTRNSLLNPE…FGIPVRLQFY (181 aa)) form a large ATPase domain (RuvB-L) region. Residues Leu20, Arg21, Gly62, Lys65, Thr66, Thr67, Arg171, Tyr181, and Arg218 each coordinate ATP. Mg(2+) is bound at residue Thr66. The interval 182 to 252 (SIEELRQVIT…IADEALNRLE (71 aa)) is small ATPAse domain (RuvB-S). Positions 255 to 347 (KLGLDLMDRR…SEIKNQPGLL (93 aa)) are head domain (RuvB-H). DNA contacts are provided by Arg291, Arg310, and Arg315.

This sequence belongs to the RuvB family. Homohexamer. Forms an RuvA(8)-RuvB(12)-Holliday junction (HJ) complex. HJ DNA is sandwiched between 2 RuvA tetramers; dsDNA enters through RuvA and exits via RuvB. An RuvB hexamer assembles on each DNA strand where it exits the tetramer. Each RuvB hexamer is contacted by two RuvA subunits (via domain III) on 2 adjacent RuvB subunits; this complex drives branch migration. In the full resolvosome a probable DNA-RuvA(4)-RuvB(12)-RuvC(2) complex forms which resolves the HJ.

Its subcellular location is the cytoplasm. It catalyses the reaction ATP + H2O = ADP + phosphate + H(+). The RuvA-RuvB-RuvC complex processes Holliday junction (HJ) DNA during genetic recombination and DNA repair, while the RuvA-RuvB complex plays an important role in the rescue of blocked DNA replication forks via replication fork reversal (RFR). RuvA specifically binds to HJ cruciform DNA, conferring on it an open structure. The RuvB hexamer acts as an ATP-dependent pump, pulling dsDNA into and through the RuvAB complex. RuvB forms 2 homohexamers on either side of HJ DNA bound by 1 or 2 RuvA tetramers; 4 subunits per hexamer contact DNA at a time. Coordinated motions by a converter formed by DNA-disengaged RuvB subunits stimulates ATP hydrolysis and nucleotide exchange. Immobilization of the converter enables RuvB to convert the ATP-contained energy into a lever motion, pulling 2 nucleotides of DNA out of the RuvA tetramer per ATP hydrolyzed, thus driving DNA branch migration. The RuvB motors rotate together with the DNA substrate, which together with the progressing nucleotide cycle form the mechanistic basis for DNA recombination by continuous HJ branch migration. Branch migration allows RuvC to scan DNA until it finds its consensus sequence, where it cleaves and resolves cruciform DNA. This Zymomonas mobilis subsp. mobilis (strain ATCC 31821 / ZM4 / CP4) protein is Holliday junction branch migration complex subunit RuvB.